Here is a 393-residue protein sequence, read N- to C-terminus: Methylthioribose kinase (393 aa).

ATP is bound by residues Asn38, Lys53, and 107–109 (EDL). Asp225 lines the substrate pocket. Residue 242–244 (DPE) participates in ATP binding. Arg332 provides a ligand contact to substrate.

The protein belongs to the methylthioribose kinase family. Homodimer.

It carries out the reaction 5-(methylsulfanyl)-D-ribose + ATP = 5-(methylsulfanyl)-alpha-D-ribose 1-phosphate + ADP + H(+). Its pathway is amino-acid biosynthesis; L-methionine biosynthesis via salvage pathway; S-methyl-5-thio-alpha-D-ribose 1-phosphate from S-methyl-5'-thioadenosine (hydrolase route): step 2/2. Catalyzes the phosphorylation of methylthioribose into methylthioribose-1-phosphate. The polypeptide is Methylthioribose kinase (Bacillus cereus (strain G9842)).